Reading from the N-terminus, the 366-residue chain is Rab9 effector protein with kelch motifs (366 aa).

Kelch repeat units lie at residues 49–95 (KILI…FISA), 100–146 (NIWV…TSSA), 151–200 (KLYV…VLTA), 204–253 (KLFV…AWKS), 254–303 (YIYI…LLPW), and 343–366 (LCFI…TILQ).

Rab9 effector required for endosome to trans-Golgi network (TGN) transport. This chain is Rab9 effector protein with kelch motifs (rabepk), found in Xenopus laevis (African clawed frog).